Reading from the N-terminus, the 455-residue chain is mRNA cleavage and polyadenylation factor CLP1 (455 aa).

Residues Glu-28 and Lys-67 each contribute to the ATP site. The segment at 112 to 131 is disordered; sequence EAAARNNGGGRSAPHGPRVL. 137-142 is a binding site for ATP; it reads GCGRTS.

The protein belongs to the Clp1 family. Clp1 subfamily. Component of a pre-mRNA cleavage factor complex. Interacts directly with PCF11.

It localises to the nucleus. Its function is as follows. Required for endonucleolytic cleavage during polyadenylation-dependent pre-mRNA 3'-end formation. This Pyricularia oryzae (strain 70-15 / ATCC MYA-4617 / FGSC 8958) (Rice blast fungus) protein is mRNA cleavage and polyadenylation factor CLP1.